A 1126-amino-acid polypeptide reads, in one-letter code: Stress response protein nst1 (1126 aa).

The segment covering 1–17 (MSTAAPAASATNSAIPA) has biased composition (low complexity). Disordered stretches follow at residues 1–192 (MSTA…STQE), 266–348 (NQGS…ARAA), 404–453 (AAHQ…EQRM), 492–774 (LLEE…NGLP), 823–914 (NGAR…AQRD), 939–965 (LSQSLPGATAPGPLPGPARASFGGPSL), and 1075–1126 (FEPD…PMGF). A compositionally biased stretch (basic residues) spans 35 to 45 (NRKKQKRRQKQ). Residues 96–111 (ANHKDDQDSVDAHDDY) show a composition bias toward basic and acidic residues. Over residues 125–136 (TGRKSKKKKGKK) the composition is skewed to basic residues. Residues 291–300 (GQHTRTQGQF) show a composition bias toward polar residues. 2 stretches are compositionally biased toward acidic residues: residues 311 to 344 (PEEEDDDDLEEDYDEDEEDDEPYSDEDSDDEDDE) and 419 to 448 (DEEDYDEEEDEDYDSQEDEDYEEDEMDTMT). The stretch at 479-655 (KVAEQRQQKL…KREYQAKRTS (177 aa)) forms a coiled coil. Basic and acidic residues-rich tracts occupy residues 492–512 (LLEEETRNEQRNAKKAREAQK) and 522–651 (QAKE…EYQA). Composition is skewed to polar residues over residues 655-670 (SPFSSNQHPQISSSPV) and 694-721 (QPSQQDSHTSSPHSQPASTDPSQASVSP). Over residues 727–737 (SQSSGASSVAS) the composition is skewed to low complexity. Composition is skewed to polar residues over residues 846-860 (GQQQIPGAFSAQQSG) and 867-885 (RQPSGSFERSPLEGQTQPM). A compositionally biased stretch (low complexity) spans 886–898 (PISRPSPIKRPSS). A compositionally biased stretch (basic and acidic residues) spans 902–914 (DQRKNGDRTAQRD). The span at 1115–1126 (VLRQFSSPPMGF) shows a compositional bias: polar residues.

It belongs to the NST1 family.

It localises to the cytoplasm. May act as a negative regulator of salt tolerance. The sequence is that of Stress response protein nst1 (nst1) from Aspergillus clavatus (strain ATCC 1007 / CBS 513.65 / DSM 816 / NCTC 3887 / NRRL 1 / QM 1276 / 107).